The following is a 556-amino-acid chain: Oxygen-dependent choline dehydrogenase (556 aa).

4 to 33 (DYIIIGAGSAGNVLATRLTEDPNTSVLLLE) lines the FAD pocket. His473 (proton acceptor) is an active-site residue.

It belongs to the GMC oxidoreductase family. FAD serves as cofactor.

It carries out the reaction choline + A = betaine aldehyde + AH2. The catalysed reaction is betaine aldehyde + NAD(+) + H2O = glycine betaine + NADH + 2 H(+). It functions in the pathway amine and polyamine biosynthesis; betaine biosynthesis via choline pathway; betaine aldehyde from choline (cytochrome c reductase route): step 1/1. Its function is as follows. Involved in the biosynthesis of the osmoprotectant glycine betaine. Catalyzes the oxidation of choline to betaine aldehyde and betaine aldehyde to glycine betaine at the same rate. The chain is Oxygen-dependent choline dehydrogenase from Shigella flexneri serotype 5b (strain 8401).